A 242-amino-acid polypeptide reads, in one-letter code: Putative S-adenosyl-L-methionine-dependent methyltransferase Mmcs_0580 (242 aa).

Residues Asp104 and 134 to 135 (DL) each bind S-adenosyl-L-methionine.

It belongs to the UPF0677 family.

In terms of biological role, exhibits S-adenosyl-L-methionine-dependent methyltransferase activity. The chain is Putative S-adenosyl-L-methionine-dependent methyltransferase Mmcs_0580 from Mycobacterium sp. (strain MCS).